The chain runs to 457 residues: Beta-1,4-mannosyltransferase egh (457 aa).

Transmembrane regions (helical) follow at residues 8-28, 35-55, 57-77, 346-366, 378-398, and 415-435; these read LLHC…SGGI, FTLV…LYLL, FLTL…VFYN, LLGI…NIIF, VDFV…FGVI, and VLGA…AVIW.

Belongs to the glycosyltransferase 2 family.

It localises to the membrane. Glycosyltransferase with a proposed role in glycosphingolipid biosynthesis. Neurogenic protein implicated in epithelial development. Critical component of a differential oocyte-follicle cell adhesive system. This Drosophila melanogaster (Fruit fly) protein is Beta-1,4-mannosyltransferase egh (egh).